The sequence spans 477 residues: Glycogen synthase (477 aa).

Lysine 15 is a binding site for ADP-alpha-D-glucose.

This sequence belongs to the glycosyltransferase 1 family. Bacterial/plant glycogen synthase subfamily.

The enzyme catalyses [(1-&gt;4)-alpha-D-glucosyl](n) + ADP-alpha-D-glucose = [(1-&gt;4)-alpha-D-glucosyl](n+1) + ADP + H(+). The protein operates within glycan biosynthesis; glycogen biosynthesis. Its function is as follows. Synthesizes alpha-1,4-glucan chains using ADP-glucose. In Shigella sonnei (strain Ss046), this protein is Glycogen synthase.